We begin with the raw amino-acid sequence, 426 residues long: MCDRNGGRRLRQWLIEQIDSSMYPGLIWENEEKSMFRIPWKHAGKQDYNQEVDASIFKAWAVFKGKFKEGDKAEPATWKTRLRCALNKSPDFEEVTDRSQLDISEPYKVYRIVPEEEQKCKLGVATAGCVNEVTEMECGRSEIDELIKEPSVDDYMGMIKRSPSPPEACRSQLLPDWWAQQPSTGVPLVTGYTTYDAHHSAFSQMVISFYYGGKLVGQATTTCPEGCRLSLSQPGLPGTKLYGPEGLELVRFPPADAIPSERQRQVTRKLFGHLERGVLLHSSRQGVFVKRLCQGRVFCSGNAVVCKGRPNKLERDEVVQVFDTSQFFRELQQFYNSQGRLPDGRVVLCFGEEFPDMAPLRSKLILVQIEQLYVRQLAEEAGKSCGAGSVMQAPEEPPPDQVFRMFPDICASHQRSFFRENQQITV.

The IRF tryptophan pentad repeat DNA-binding region spans 7–114; the sequence is GRRLRQWLIE…EPYKVYRIVP (108 aa).

Belongs to the IRF family. As to quaternary structure, interacts (via C-terminus) with TRIM21 (via C-terminus). Interacts with the BATF-JUNB heterodimer. Interacts with BATF (via bZIP domain); the interaction is direct. Interacts with COPS2. Interacts with SPI1. Ubiquitinated. Ubiquitination by TRIM21 in macrophages, a process that is strongly increased upon interferon gamma stimulation, leds to the enhanced transcriptional activity of target cytokine genes. Ubiquitination leads to its degradation by the proteasome. In terms of processing, sumoylated with SUMO3. Desumoylated by SENP1. In terms of tissue distribution, predominantly expressed in lymphoid tissues.

It localises to the nucleus. It is found in the cytoplasm. Functionally, transcription factor that specifically binds to the upstream regulatory region of type I interferon (IFN) and IFN-inducible MHC class I genes (the interferon consensus sequence (ICS)). Can both act as a transcriptional activator or repressor. Plays a negative regulatory role in cells of the immune system. Involved in CD8(+) dendritic cell differentiation by forming a complex with the BATF-JUNB heterodimer in immune cells, leading to recognition of AICE sequence (5'-TGAnTCA/GAAA-3'), an immune-specific regulatory element, followed by cooperative binding of BATF and IRF8 and activation of genes. Required for the development of plasmacytoid dendritic cells (pDCs), which produce most of the type I IFN in response to viral infection. Positively regulates macroautophagy in dendritic cells. Acts as a transcriptional repressor of osteoclast differentiation factors such as NFATC1 and EEIG1. This is Interferon regulatory factor 8 from Homo sapiens (Human).